Here is a 192-residue protein sequence, read N- to C-terminus: Ion-translocating oxidoreductase complex subunit A (192 aa).

Transmembrane regions (helical) follow at residues 5-25 (LLLLIGTVLVNNFVLVKFLGL), 39-59 (IGMSMATTFVLTLASILSYLV), 65-85 (LPFDLGYLRTMSFILVIAVVV), 102-122 (ALGIYLPLITTNCAVLGVALL), 134-154 (AIFGFGAAVGFSLVLILFSAM), and 171-191 (AIAMVTAGLMSLAFMGFTGLV).

This sequence belongs to the NqrDE/RnfAE family. The complex is composed of six subunits: RnfA, RnfB, RnfC, RnfD, RnfE and RnfG.

The protein resides in the cell inner membrane. Functionally, part of a membrane-bound complex that couples electron transfer with translocation of ions across the membrane. The polypeptide is Ion-translocating oxidoreductase complex subunit A (Shewanella pealeana (strain ATCC 700345 / ANG-SQ1)).